A 596-amino-acid chain; its full sequence is Bromodomain-containing protein 9 (596 aa).

Positions 1 to 10 (MGKKHKKHKA) are enriched in basic residues. 2 disordered regions span residues 1 to 26 (MGKK…PLEK) and 38 to 137 (EVTE…AENE). Residues 50–62 (SYYDDRSDHERER) show a composition bias toward basic and acidic residues. The residue at position 56 (S56) is a Phosphoserine. Over residues 63–73 (HREKKKKKKKK) the composition is skewed to basic residues. A compositionally biased stretch (basic and acidic residues) spans 74 to 85 (SEKEKHLDEEER). A compositionally biased stretch (basic residues) spans 86 to 97 (RKRKEEKKRKRE). A compositionally biased stretch (basic and acidic residues) spans 111 to 126 (DPGKKVEVEPPPDRPV). Residues 136–240 (NESTPIQRLL…HAGFKMMSKA (105 aa)) enclose the Bromo domain. The segment at 214–216 (TYN) is histone H4K5ac H4K8ac and histone H4K5bu H4K8bu binding. Position 372 is an N6-acetyllysine; alternate (K372). A Glycyl lysine isopeptide (Lys-Gly) (interchain with G-Cter in SUMO2); alternate cross-link involves residue K372. The disordered stretch occupies residues 536–596 (AQAERGGSRP…SPEPAAPAKN (61 aa)). Low complexity predominate over residues 543 to 555 (SRPSSNLSSLSTA). 2 positions are modified to phosphoserine: S565 and S587.

In terms of assembly, binds acetylated histones H3 and H4. Binds butyrylated histone H4. Component of the multiprotein chromatin-remodeling subcomplex SWI/SNF called GBAF, which includes at least BICRA or BICRAL (mutually exclusive), BRD9, SS18, the core BAF subunits, SMARCA2/BRM, SMARCA4/BRG1/BAF190A, ACTL6A/BAF53, SMARCC1/BAF155, and SMARCD1/BAF60A. Interacts (via N-terminal bromodomain) with acetylated RAD54. Interacts (via C-terminus) with RAD51.

Its subcellular location is the nucleus. Plays a role in chromatin remodeling and regulation of transcription. Acts as a chromatin reader that recognizes and binds acylated histones: binds histones that are acetylated and/or butyrylated. Component of SWI/SNF chromatin remodeling subcomplex GBAF that carries out key enzymatic activities, changing chromatin structure by altering DNA-histone contacts within a nucleosome in an ATP-dependent manner. Also orchestrates the RAD51-RAD54 complex formation and thereby plays a role in homologous recombination (HR). The polypeptide is Bromodomain-containing protein 9 (Brd9) (Mus musculus (Mouse)).